The sequence spans 371 residues: Probable dual-specificity RNA methyltransferase RlmN (371 aa).

Residue glutamate 113 is the Proton acceptor of the active site. The region spanning 119 to 352 (QSWGNSVCVT…TTVRREMGGE (234 aa)) is the Radical SAM core domain. Cysteine 126 and cysteine 357 are oxidised to a cystine. [4Fe-4S] cluster contacts are provided by cysteine 133, cysteine 137, and cysteine 140. Residues 182–183 (GE), serine 214, 237–239 (SLH), and asparagine 313 each bind S-adenosyl-L-methionine. The active-site S-methylcysteine intermediate is the cysteine 357.

Belongs to the radical SAM superfamily. RlmN family. Requires [4Fe-4S] cluster as cofactor.

The protein resides in the cytoplasm. The catalysed reaction is adenosine(2503) in 23S rRNA + 2 reduced [2Fe-2S]-[ferredoxin] + 2 S-adenosyl-L-methionine = 2-methyladenosine(2503) in 23S rRNA + 5'-deoxyadenosine + L-methionine + 2 oxidized [2Fe-2S]-[ferredoxin] + S-adenosyl-L-homocysteine. The enzyme catalyses adenosine(37) in tRNA + 2 reduced [2Fe-2S]-[ferredoxin] + 2 S-adenosyl-L-methionine = 2-methyladenosine(37) in tRNA + 5'-deoxyadenosine + L-methionine + 2 oxidized [2Fe-2S]-[ferredoxin] + S-adenosyl-L-homocysteine. Its function is as follows. Specifically methylates position 2 of adenine 2503 in 23S rRNA and position 2 of adenine 37 in tRNAs. This chain is Probable dual-specificity RNA methyltransferase RlmN, found in Symbiobacterium thermophilum (strain DSM 24528 / JCM 14929 / IAM 14863 / T).